The following is a 414-amino-acid chain: Serine/threonine transporter SstT (414 aa).

Helical transmembrane passes span 19-39, 55-75, 89-109, 148-168, 189-209, 223-243, 297-317, 323-343, and 363-383; these read IIVG…LEPV, FVKG…IAAI, IVML…LASF, ALAT…GIAL, IVHL…AATL, LLLV…PFIV, IPLG…VLTL, LGIP…AVCA, and LFGI…VIGV.

The protein belongs to the dicarboxylate/amino acid:cation symporter (DAACS) (TC 2.A.23) family.

It is found in the cell inner membrane. It carries out the reaction L-serine(in) + Na(+)(in) = L-serine(out) + Na(+)(out). The enzyme catalyses L-threonine(in) + Na(+)(in) = L-threonine(out) + Na(+)(out). Its function is as follows. Involved in the import of serine and threonine into the cell, with the concomitant import of sodium (symport system). This Actinobacillus succinogenes (strain ATCC 55618 / DSM 22257 / CCUG 43843 / 130Z) protein is Serine/threonine transporter SstT.